The chain runs to 289 residues: 2-dehydro-3-deoxyphosphooctonate aldolase (289 aa).

This sequence belongs to the KdsA family.

It localises to the cytoplasm. It carries out the reaction D-arabinose 5-phosphate + phosphoenolpyruvate + H2O = 3-deoxy-alpha-D-manno-2-octulosonate-8-phosphate + phosphate. Its pathway is carbohydrate biosynthesis; 3-deoxy-D-manno-octulosonate biosynthesis; 3-deoxy-D-manno-octulosonate from D-ribulose 5-phosphate: step 2/3. It functions in the pathway bacterial outer membrane biogenesis; lipopolysaccharide biosynthesis. The protein is 2-dehydro-3-deoxyphosphooctonate aldolase of Cupriavidus necator (strain ATCC 17699 / DSM 428 / KCTC 22496 / NCIMB 10442 / H16 / Stanier 337) (Ralstonia eutropha).